The sequence spans 343 residues: GTP 3',8-cyclase (343 aa).

Positions 19–244 (PFGRNISYLR…TDLDDSTGGP (226 aa)) constitute a Radical SAM core domain. Arg-28 contributes to the GTP binding site. The [4Fe-4S] cluster site is built by Cys-35 and Cys-39. S-adenosyl-L-methionine is bound at residue Tyr-41. Position 42 (Cys-42) interacts with [4Fe-4S] cluster. GTP is bound at residue Arg-77. Gly-81 lines the S-adenosyl-L-methionine pocket. Thr-111 is a binding site for GTP. Ser-135 serves as a coordination point for S-adenosyl-L-methionine. Lys-171 lines the GTP pocket. Met-205 serves as a coordination point for S-adenosyl-L-methionine. The [4Fe-4S] cluster site is built by Cys-268 and Cys-271. 273–275 (RVR) is a GTP binding site. Cys-285 lines the [4Fe-4S] cluster pocket.

Belongs to the radical SAM superfamily. MoaA family. Monomer and homodimer. The cofactor is [4Fe-4S] cluster.

It carries out the reaction GTP + AH2 + S-adenosyl-L-methionine = (8S)-3',8-cyclo-7,8-dihydroguanosine 5'-triphosphate + 5'-deoxyadenosine + L-methionine + A + H(+). The protein operates within cofactor biosynthesis; molybdopterin biosynthesis. Functionally, catalyzes the cyclization of GTP to (8S)-3',8-cyclo-7,8-dihydroguanosine 5'-triphosphate. In Nitrobacter winogradskyi (strain ATCC 25391 / DSM 10237 / CIP 104748 / NCIMB 11846 / Nb-255), this protein is GTP 3',8-cyclase.